We begin with the raw amino-acid sequence, 139 residues long: Large ribosomal subunit protein uL16 (139 aa).

Positions 1-17 are enriched in basic residues; it reads MLIPRRTKHRKQHHPRR. The interval 1-24 is disordered; sequence MLIPRRTKHRKQHHPRRTGAASGG.

This sequence belongs to the universal ribosomal protein uL16 family. As to quaternary structure, part of the 50S ribosomal subunit.

Binds 23S rRNA and is also seen to make contacts with the A and possibly P site tRNAs. The polypeptide is Large ribosomal subunit protein uL16 (Beutenbergia cavernae (strain ATCC BAA-8 / DSM 12333 / CCUG 43141 / JCM 11478 / NBRC 16432 / NCIMB 13614 / HKI 0122)).